A 219-amino-acid polypeptide reads, in one-letter code: N-(5'-phosphoribosyl)anthranilate isomerase (219 aa).

The protein belongs to the TrpF family.

The enzyme catalyses N-(5-phospho-beta-D-ribosyl)anthranilate = 1-(2-carboxyphenylamino)-1-deoxy-D-ribulose 5-phosphate. It functions in the pathway amino-acid biosynthesis; L-tryptophan biosynthesis; L-tryptophan from chorismate: step 3/5. The polypeptide is N-(5'-phosphoribosyl)anthranilate isomerase (Bradyrhizobium sp. (strain ORS 278)).